The primary structure comprises 523 residues: Arylsulfatase K (523 aa).

Residues 1–16 form the signal peptide; sequence MLRVFVLLIFNVNAYC. Ca(2+)-binding residues include aspartate 35 and cysteine 75. Cysteine 75 acts as the Nucleophile in catalysis. A 3-oxoalanine (Cys) modification is found at cysteine 75. An N-linked (GlcNAc...) asparagine glycan is attached at asparagine 103. Residues lysine 123 and histidine 246 each contribute to the substrate site. A glycan (N-linked (GlcNAc...) asparagine) is linked at asparagine 257. Residues aspartate 308 and histidine 309 each coordinate Ca(2+). An N-linked (GlcNAc...) asparagine glycan is attached at asparagine 405.

It belongs to the sulfatase family. Requires Ca(2+) as cofactor. Post-translationally, the conversion to 3-oxoalanine (also known as C-formylglycine, FGly), of a serine or cysteine residue in prokaryotes and of a cysteine residue in eukaryotes, is critical for catalytic activity.

It localises to the secreted. The protein resides in the lysosome. The catalysed reaction is an aryl sulfate + H2O = a phenol + sulfate + H(+). It catalyses the reaction Hydrolysis of the 2-sulfate groups of the 2-O-sulfo-D-glucuronate residues of chondroitin sulfate, heparin and heparitin sulfate.. Functionally, catalyzes the hydrolysis of pseudosubstrates such as p-nitrocatechol sulfate and p-nitrophenyl sulfate. Catalyzes the hydrolysis of the 2-sulfate groups of the 2-O-sulfo-D-glucuronate residues of chondroitin sulfate, heparin and heparitin sulfate. Acts selectively on 2-sulfoglucuronate and lacks activity against 2-sulfoiduronate. The polypeptide is Arylsulfatase K (arsk) (Danio rerio (Zebrafish)).